Consider the following 237-residue polypeptide: 2',3'-cyclic-nucleotide 3'-phosphodiesterase (237 aa).

Histidine 21 functions as the Proton donor/acceptor in the catalytic mechanism. Threonine 23 is a substrate binding site. A disordered region spans residues 117 to 137 (HLYTTDSHGNTVKKKSKQSQD). Histidine 167 functions as the Proton donor/acceptor in the catalytic mechanism. Substrate is bound by residues serine 169 and tyrosine 172.

The protein belongs to the 2H phosphoesterase superfamily. CPD1 family.

It is found in the golgi apparatus. The catalysed reaction is a nucleoside 2',3'-cyclic phosphate + H2O = a nucleoside 2'-phosphate + H(+). Functionally, involved in the metabolism of ADP-ribose 1',2'-cyclic phosphate which is produced as a consequence of tRNA splicing. The polypeptide is 2',3'-cyclic-nucleotide 3'-phosphodiesterase (CPD1) (Debaryomyces hansenii (strain ATCC 36239 / CBS 767 / BCRC 21394 / JCM 1990 / NBRC 0083 / IGC 2968) (Yeast)).